A 351-amino-acid chain; its full sequence is 3-dehydroquinate synthase (351 aa).

Residues 126–127, K138, and K147 contribute to the NAD(+) site; that span reads TT. Zn(2+) is bound by residues E180, H244, and H260.

It belongs to the sugar phosphate cyclases superfamily. Dehydroquinate synthase family. The cofactor is Co(2+). It depends on Zn(2+) as a cofactor. Requires NAD(+) as cofactor.

The protein localises to the cytoplasm. It carries out the reaction 7-phospho-2-dehydro-3-deoxy-D-arabino-heptonate = 3-dehydroquinate + phosphate. The protein operates within metabolic intermediate biosynthesis; chorismate biosynthesis; chorismate from D-erythrose 4-phosphate and phosphoenolpyruvate: step 2/7. Functionally, catalyzes the conversion of 3-deoxy-D-arabino-heptulosonate 7-phosphate (DAHP) to dehydroquinate (DHQ). The chain is 3-dehydroquinate synthase from Exiguobacterium sp. (strain ATCC BAA-1283 / AT1b).